The chain runs to 807 residues: Spondin-1 (807 aa).

Residues 1 to 28 form the signal peptide; sequence MRLSPVSLRLSRGPALLALALPLAAALA. Residues 29–194 form the Reelin domain; that stretch reads FSDETLDKVT…DPTLDGVTDR (166 aa). Intrachain disulfides connect Cys44–Cys128, Cys156–Cys182, Cys199–Cys336, Cys200–Cys340, Cys202–Cys415, Cys443–Cys480, Cys454–Cys489, Cys459–Cys494, Cys502–Cys538, Cys513–Cys517, Cys548–Cys554, Cys559–Cys595, Cys570–Cys574, Cys605–Cys610, Cys615–Cys650, Cys626–Cys630, and Cys660–Cys665. Residues 195–388 enclose the Spondin domain; it reads PILDCCACGT…LTSLDHPQSP (194 aa). Residue Asn214 is glycosylated (N-linked (GlcNAc...) asparagine). Ca(2+)-binding residues include Asp325, Asp354, and Asp358. TSP type-1 domains are found at residues 442–495, 501–555, 558–611, 614–666, and 668–721; these read TCIY…PGCS, TCTM…EECS, SCLV…PECH, PCLL…PECP, and DCEL…RKCL. Residue Asn681 is glycosylated (N-linked (GlcNAc...) asparagine). A compositionally biased stretch (basic and acidic residues) spans 732 to 746; sequence REARESRRSEQLREE. Positions 732–752 are disordered; it reads REARESRRSEQLREESDGEQF. The TSP type-1 6 domain maps to 754–806; sequence GCRMRPWTAWSECTKLCGGGIQERYMTVKKRFKSSQFTSCKDKKEIRACNVHP.

In terms of assembly, binds to the central extracellular domain of APP and inhibits beta-secretase cleavage of APP.

The protein resides in the secreted. The protein localises to the extracellular space. Its subcellular location is the extracellular matrix. In terms of biological role, cell adhesion protein that promotes the attachment of spinal cord and sensory neuron cells and the outgrowth of neurites in vitro. May contribute to the growth and guidance of axons in both the spinal cord and the PNS. The chain is Spondin-1 (Spon1) from Mus musculus (Mouse).